A 365-amino-acid chain; its full sequence is P43 5S RNA-binding protein (365 aa).

C2H2-type zinc fingers lie at residues 15–39, 45–69, 75–100, 106–130, 136–160, 163–187, 191–213, 220–245, and 251–275; these read LRCP…MAGH, WKCG…VKRH, LSCP…LYKH, LKCF…LSVH, SVCD…QKRH, YRCS…VKKH, LQCA…KATH, LPCP…RKLH, and HRCP…LVVH.

The 42S RNP particle comprises four subunits each of which contains one molecule of 5S RNA, three molecules of tRNA, two molecules of p50 (EF1-alpha) and one molecule of the 5S RNA binding protein 43.

Its function is as follows. p43 is a 5S RNA binding protein which is a major constituent of oocytes and comprises part of a 42S ribonucleoprotein storage particle. The chain is P43 5S RNA-binding protein from Xenopus laevis (African clawed frog).